Consider the following 272-residue polypeptide: Small ribosomal subunit protein uS2 (272 aa).

Residues L251–E272 form a disordered region. A compositionally biased stretch (low complexity) spans T253–E264.

This sequence belongs to the universal ribosomal protein uS2 family.

This chain is Small ribosomal subunit protein uS2, found in Bifidobacterium adolescentis (strain ATCC 15703 / DSM 20083 / NCTC 11814 / E194a).